The chain runs to 512 residues: 2-isopropylmalate synthase (512 aa).

A Pyruvate carboxyltransferase domain is found at 5–268 (LIIFDTTLRD…ELGIDTQHIV (264 aa)). Residues aspartate 14, histidine 202, histidine 204, and asparagine 239 each coordinate Mn(2+). The interval 394–512 (GFVSLSQRSE…SKAERVAAQG (119 aa)) is regulatory domain.

This sequence belongs to the alpha-IPM synthase/homocitrate synthase family. LeuA type 1 subfamily. In terms of assembly, homodimer. The cofactor is Mn(2+).

Its subcellular location is the cytoplasm. The enzyme catalyses 3-methyl-2-oxobutanoate + acetyl-CoA + H2O = (2S)-2-isopropylmalate + CoA + H(+). The protein operates within amino-acid biosynthesis; L-leucine biosynthesis; L-leucine from 3-methyl-2-oxobutanoate: step 1/4. Its function is as follows. Catalyzes the condensation of the acetyl group of acetyl-CoA with 3-methyl-2-oxobutanoate (2-ketoisovalerate) to form 3-carboxy-3-hydroxy-4-methylpentanoate (2-isopropylmalate). The chain is 2-isopropylmalate synthase from Paracidovorax citrulli (strain AAC00-1) (Acidovorax citrulli).